The chain runs to 167 residues: Adenylylsulfate reductase subunit beta (167 aa).

2 4Fe-4S ferredoxin-type domains span residues 1–35 (MPTF…LDPE) and 38–67 (KAFN…ARPY). Positions 10, 13, 21, 25, 47, 50, 53, and 57 each coordinate [4Fe-4S] cluster.

As to quaternary structure, heterodimer composed of AprA and AprB. The heterodimers can dimerize to form heterotetramers. Requires [4Fe-4S] cluster as cofactor.

The protein resides in the cytoplasm. In terms of biological role, iron-sulfur cluster subunit of the adenylylsulfate reductase which catalyzes reversibly the reduction of adenosine 5'-phosphosulfate (APS) to sulfite and AMP during dissimilatory sulfate reduction. The iron-sulfur cluster 2 is thought to accept electrons from a still unknown electron donor and transfer electrons to the iron-sulfur cluster 1 of this protein and then onto the FAD of AprA. The protein is Adenylylsulfate reductase subunit beta of Megalodesulfovibrio gigas (strain ATCC 19364 / DSM 1382 / NCIMB 9332 / VKM B-1759) (Desulfovibrio gigas).